The chain runs to 388 residues: Succinate--CoA ligase [ADP-forming] subunit beta (388 aa).

The region spanning 9 to 244 is the ATP-grasp domain; it reads KQLFAEYGLP…PSQDDPREAH (236 aa). Residues Lys-46, 53–55, Glu-99, Thr-102, and Glu-107 each bind ATP; that span reads GRG. Positions 199 and 213 each coordinate Mg(2+). Substrate-binding positions include Asn-264 and 321–323; that span reads GIV.

This sequence belongs to the succinate/malate CoA ligase beta subunit family. Heterotetramer of two alpha and two beta subunits. It depends on Mg(2+) as a cofactor.

The catalysed reaction is succinate + ATP + CoA = succinyl-CoA + ADP + phosphate. The enzyme catalyses GTP + succinate + CoA = succinyl-CoA + GDP + phosphate. The protein operates within carbohydrate metabolism; tricarboxylic acid cycle; succinate from succinyl-CoA (ligase route): step 1/1. Succinyl-CoA synthetase functions in the citric acid cycle (TCA), coupling the hydrolysis of succinyl-CoA to the synthesis of either ATP or GTP and thus represents the only step of substrate-level phosphorylation in the TCA. The beta subunit provides nucleotide specificity of the enzyme and binds the substrate succinate, while the binding sites for coenzyme A and phosphate are found in the alpha subunit. The protein is Succinate--CoA ligase [ADP-forming] subunit beta of Ectopseudomonas mendocina (strain ymp) (Pseudomonas mendocina).